The sequence spans 106 residues: Large ribosomal subunit protein uL24 (106 aa).

Belongs to the universal ribosomal protein uL24 family. As to quaternary structure, part of the 50S ribosomal subunit.

One of two assembly initiator proteins, it binds directly to the 5'-end of the 23S rRNA, where it nucleates assembly of the 50S subunit. Its function is as follows. One of the proteins that surrounds the polypeptide exit tunnel on the outside of the subunit. This is Large ribosomal subunit protein uL24 from Gluconobacter oxydans (strain 621H) (Gluconobacter suboxydans).